Here is a 387-residue protein sequence, read N- to C-terminus: Cysteine desulfurase IscS (387 aa).

Residues 73-74, Asn155, Gln183, and 203-205 contribute to the pyridoxal 5'-phosphate site; these read AT and SAH. Lys206 is modified (N6-(pyridoxal phosphate)lysine). Thr241 serves as a coordination point for pyridoxal 5'-phosphate. The active-site Cysteine persulfide intermediate is Cys328. Cys328 is a [2Fe-2S] cluster binding site.

This sequence belongs to the class-V pyridoxal-phosphate-dependent aminotransferase family. NifS/IscS subfamily. In terms of assembly, homodimer. Forms a heterotetramer with IscU, interacts with other sulfur acceptors. The cofactor is pyridoxal 5'-phosphate.

The protein localises to the cytoplasm. It carries out the reaction (sulfur carrier)-H + L-cysteine = (sulfur carrier)-SH + L-alanine. It functions in the pathway cofactor biosynthesis; iron-sulfur cluster biosynthesis. Its function is as follows. Master enzyme that delivers sulfur to a number of partners involved in Fe-S cluster assembly, tRNA modification or cofactor biosynthesis. Catalyzes the removal of elemental sulfur atoms from cysteine to produce alanine. Functions as a sulfur delivery protein for Fe-S cluster synthesis onto IscU, an Fe-S scaffold assembly protein, as well as other S acceptor proteins. The protein is Cysteine desulfurase IscS of Helicobacter pylori (strain ATCC 700392 / 26695) (Campylobacter pylori).